A 362-amino-acid polypeptide reads, in one-letter code: Cobalt-precorrin-5B C(1)-methyltransferase (362 aa).

This sequence belongs to the CbiD family.

It carries out the reaction Co-precorrin-5B + S-adenosyl-L-methionine = Co-precorrin-6A + S-adenosyl-L-homocysteine. It participates in cofactor biosynthesis; adenosylcobalamin biosynthesis; cob(II)yrinate a,c-diamide from sirohydrochlorin (anaerobic route): step 6/10. In terms of biological role, catalyzes the methylation of C-1 in cobalt-precorrin-5B to form cobalt-precorrin-6A. The protein is Cobalt-precorrin-5B C(1)-methyltransferase of Burkholderia vietnamiensis (strain G4 / LMG 22486) (Burkholderia cepacia (strain R1808)).